A 167-amino-acid chain; its full sequence is Shikimate kinase (167 aa).

ATP is bound at residue 12–17; the sequence is GSGKTT. Residue threonine 16 coordinates Mg(2+). Substrate contacts are provided by aspartate 34, arginine 58, and glycine 80. Arginine 117 is a binding site for ATP. Arginine 135 lines the substrate pocket. Arginine 152 lines the ATP pocket.

The protein belongs to the shikimate kinase family. Monomer. It depends on Mg(2+) as a cofactor.

Its subcellular location is the cytoplasm. The enzyme catalyses shikimate + ATP = 3-phosphoshikimate + ADP + H(+). It participates in metabolic intermediate biosynthesis; chorismate biosynthesis; chorismate from D-erythrose 4-phosphate and phosphoenolpyruvate: step 5/7. In terms of biological role, catalyzes the specific phosphorylation of the 3-hydroxyl group of shikimic acid using ATP as a cosubstrate. The chain is Shikimate kinase from Salinispora tropica (strain ATCC BAA-916 / DSM 44818 / JCM 13857 / NBRC 105044 / CNB-440).